The primary structure comprises 137 residues: ATP synthase epsilon chain, chloroplastic (137 aa).

Belongs to the ATPase epsilon chain family. As to quaternary structure, F-type ATPases have 2 components, CF(1) - the catalytic core - and CF(0) - the membrane proton channel. CF(1) has five subunits: alpha(3), beta(3), gamma(1), delta(1), epsilon(1). CF(0) has three main subunits: a, b and c.

The protein localises to the plastid. Its subcellular location is the chloroplast thylakoid membrane. In terms of biological role, produces ATP from ADP in the presence of a proton gradient across the membrane. This is ATP synthase epsilon chain, chloroplastic from Oryza nivara (Indian wild rice).